The following is a 335-amino-acid chain: Probable cyclin-H (335 aa).

This sequence belongs to the cyclin family. Cyclin C subfamily.

The protein resides in the nucleus. In terms of biological role, regulates CDK7, the catalytic subunit of the CDK-activating kinase (CAK) enzymatic complex. This chain is Probable cyclin-H (CYCH), found in Echinococcus multilocularis (Fox tapeworm).